The sequence spans 199 residues: Recombination protein RecR (199 aa).

The C4-type zinc finger occupies 58-73 (CLVCGNVTGSDICPIC). One can recognise a Toprim domain in the interval 81–176 (GEICVVTDVA…AVTGLAQGVP (96 aa)).

The protein belongs to the RecR family.

Its function is as follows. May play a role in DNA repair. It seems to be involved in an RecBC-independent recombinational process of DNA repair. It may act with RecF and RecO. The protein is Recombination protein RecR of Paracoccus denitrificans (strain Pd 1222).